Reading from the N-terminus, the 941-residue chain is Heat shock protein 70 homolog (941 aa).

The tract at residues 851–887 (ENQPDIPEDSEDSESEDDTTTSKDSESSEITENLALP) is disordered. Positions 856-869 (IPEDSEDSESEDDT) are enriched in acidic residues.

The protein belongs to the heat shock protein 70 family.

Probable chaperone. The sequence is that of Heat shock protein 70 homolog from Acanthamoeba polyphaga (Amoeba).